Here is a 123-residue protein sequence, read N- to C-terminus: Small ribosomal subunit protein uS12 (123 aa).

Residue aspartate 89 is modified to 3-methylthioaspartic acid.

This sequence belongs to the universal ribosomal protein uS12 family. In terms of assembly, part of the 30S ribosomal subunit. Contacts proteins S8 and S17. May interact with IF1 in the 30S initiation complex.

Its function is as follows. With S4 and S5 plays an important role in translational accuracy. Functionally, interacts with and stabilizes bases of the 16S rRNA that are involved in tRNA selection in the A site and with the mRNA backbone. Located at the interface of the 30S and 50S subunits, it traverses the body of the 30S subunit contacting proteins on the other side and probably holding the rRNA structure together. The combined cluster of proteins S8, S12 and S17 appears to hold together the shoulder and platform of the 30S subunit. The polypeptide is Small ribosomal subunit protein uS12 (Methylorubrum extorquens (strain PA1) (Methylobacterium extorquens)).